Consider the following 1732-residue polypeptide: Transient receptor potential cation channel subfamily M member 3 (1732 aa).

Over 1–894 the chain is Cytoplasmic; that stretch reads MPEPWGTVYF…RKIYEFYNAP (894 aa). 4 calmodulin-binding regions span residues 192 to 215, 300 to 323, 601 to 624, and 793 to 816; these read NFELQPKLKQVFGKGLIKAAMTTG, TGKYGAEVKLRRQLEKHISLQKIN, RKRFRTLYHNLFGPKRPKALKLLG, and RKNSGLKVILGILLPPSILSLEFK. The segment at 617–625 is required for the inhibitory action of G-beta/gamma-subunits of heterotrimeric G-proteins; that stretch reads PKALKLLGM. Residue Ser796 coordinates 1,2-dioctanoyl-sn-glycero-3-phospho-(1D-myo-inositol-4,5-bisphosphate). The chain crosses the membrane as a helical span at residues 895–918; the sequence is IVKFWFYTLAYIGYLMLFNYIVLV. Residues 919 to 925 lie on the Extracellular side of the membrane; that stretch reads KMERWPS. Residues 926-948 traverse the membrane as a helical segment; sequence TQEWIVISYIFTLGIEKMREILM. Over 949 to 964 the chain is Cytoplasmic; it reads SEPGKLLQKVKVWLQE. The helical transmembrane segment at 965-985 threads the bilayer; it reads YWNVTDLIAILLFSVGMILRL. Over 986–989 the chain is Extracellular; sequence QDQP. A helical membrane pass occupies residues 990-1013; that stretch reads FRSDGRVIYCVNIIYWYIRLLDIF. The Cytoplasmic portion of the chain corresponds to 1014–1028; that stretch reads GVNKYLGPYVMMIGK. 1,2-dioctanoyl-sn-glycero-3-phospho-(1D-myo-inositol-4,5-bisphosphate)-binding residues include Lys1017 and Tyr1018. A helical transmembrane segment spans residues 1029-1056; that stretch reads MMIDMMYFVIIMLVVLMSFGVARQAILF. Residues 1057 to 1111 lie on the Extracellular side of the membrane; the sequence is PNEEPSWKLAKNIFYMPYWMIYGEVFADQIDPPCGQNETREDGKIIQLPPCKTGA. Residues 1112 to 1137 traverse the membrane as a helical segment; that stretch reads WIVPAIMACYLLVANILLVNLLIAVF. Topologically, residues 1138–1732 are cytoplasmic; it reads NNTFFEVKSI…AFQSFESKHN (595 aa). Residues 1241–1301 adopt a coiled-coil conformation; that stretch reads ERIRVTSERV…LERLTGLERA (61 aa). A compositionally biased stretch (low complexity) spans 1459 to 1476; the sequence is PVPSTAPSSSAYATLAPT. Disordered stretches follow at residues 1459–1478 and 1611–1732; these read PVPSTAPSSSAYATLAPTDR and REAE…SKHN. Composition is skewed to polar residues over residues 1635–1653, 1690–1701, and 1720–1732; these read AISSQEGDNSERTLSNNIT, NTASLRNPFQRS, and RTSAFQSFESKHN.

It belongs to the transient receptor (TC 1.A.4) family. LTrpC subfamily. TRPM3 sub-subfamily. In terms of assembly, homotetramer. Interacts with TRPM1; the interaction results in the formation of a heteromultimeric cation channel complex that are functionally different from the homomeric channels. In terms of tissue distribution, expressed primarily in the kidney and, at lower levels, in brain, testis, ovary, pancreas and spinal cord. Expression in the brain and kidney was determined at protein level. In the kidney, expressed predominantly in the collecting tubular epithelium in the medulla, medullary rays, and periglomerular regions; in the brain, highest levels are found in the cerebellum, choroid plexus, the locus coeruleus, the posterior thalamus and the substantia nigra. Down-regulated in renal tumors compared to normal kidney. Expressed in the lens.

Its subcellular location is the cell membrane. It carries out the reaction Ca(2+)(in) = Ca(2+)(out). The enzyme catalyses Mn(2+)(in) = Mn(2+)(out). The catalysed reaction is Zn(2+)(in) = Zn(2+)(out). It catalyses the reaction Mg(2+)(in) = Mg(2+)(out). Its activity is regulated as follows. Activated by the neurosteroid pregnelonone sulfate (PregS); PregS activates the channel by shifting its current-voltage activation curve toward more negative membrane potentials and also potentiates temperature-induced activation. Activated by sphingosine. Activated by heat. Intracellular Ca(2+) inhibits TRPM3 probably via interaction with Ca(2+)/calmodulin. Intracellular Mg(2+) inhibits TRPM3 activity. Both intracellular and extracellular protons block TRPM3 through propable binding sites in the pore region. Positively regulated by phosphoinositide phosphoinositol 4,5-biphosphate (PI(4,5)P2). Strongly inhibited by activation of G(i)-coupled receptors via direct binding with G-betagamma-subunits of heterotrimeric G-proteins. Its function is as follows. Constitutively active, non-selective divalent cation-conducting channel that is permeable to Ca(2+), Mn(2+), and Mg(2+), with a high permeability for Ca(2+). However, can be enhanced by increasing temperature and by ligands, including the endogenous neurosteroid pregnenolone sulfate and sphingosine-1 and suppressed by intracellular Mg(2+). Implicated in a variety of cellular processes, including insulin/peptide secretion, vascular constriction and dilation, noxious heat sensing, inflammatory and spontaneous pain sensitivity. In neurons of the dorsal root ganglia, functions as thermosensitive channel for the detection of noxious heat and spontaneous pain. Suggested to function as an ionotropic steroid receptor in beta-cell, indeed pregnenolone sulfate leads to Ca(2+) influx and enhanced insulin secretion. Mediates Zn(2+) uptake into the lumen of pancreatic beta cell secretory granules, thereby regulating insulin secretion. Forms heteromultimeric ion channels with TRPM1 which are permeable for Ca(2+) and Zn(2+) ions. Exists as multiple splice variants which differ significantly in their biophysical properties. The chain is Transient receptor potential cation channel subfamily M member 3 from Homo sapiens (Human).